A 967-amino-acid polypeptide reads, in one-letter code: Zinc finger protein with KRAB and SCAN domains 2 (967 aa).

Lysine 22 is covalently cross-linked (Glycyl lysine isopeptide (Lys-Gly) (interchain with G-Cter in SUMO2)). The 83-residue stretch at arginine 45–threonine 127 folds into the SCAN box domain. The interval tryptophan 150 to leucine 205 is disordered. The segment covering valine 167–arginine 185 has biased composition (basic and acidic residues). The 72-residue stretch at valine 229–isoleucine 300 folds into the KRAB domain. Glycyl lysine isopeptide (Lys-Gly) (interchain with G-Cter in SUMO2) cross-links involve residues lysine 242, lysine 259, lysine 277, lysine 337, lysine 482, and lysine 529. Positions arginine 586 to serine 602 are enriched in low complexity. A disordered region spans residues arginine 586–glutamine 626. Phosphoserine is present on residues serine 591 and serine 600. Residues lysine 734, lysine 745, and lysine 752 each participate in a glycyl lysine isopeptide (Lys-Gly) (interchain with G-Cter in SUMO2) cross-link. C2H2-type zinc fingers lie at residues tyrosine 775 to histidine 797, phenylalanine 803 to histidine 825, tyrosine 831 to histidine 853, tyrosine 859 to histidine 881, tyrosine 887 to histidine 909, and tyrosine 915 to histidine 937. Residues lysine 941–phenylalanine 967 are disordered. The segment covering asparagine 954–phenylalanine 967 has biased composition (basic and acidic residues).

Belongs to the krueppel C2H2-type zinc-finger protein family.

The protein resides in the nucleus. May be involved in transcriptional regulation. In Homo sapiens (Human), this protein is Zinc finger protein with KRAB and SCAN domains 2 (ZKSCAN2).